Here is a 724-residue protein sequence, read N- to C-terminus: Putative methyltransferase NSUN7 (724 aa).

The Nucleophile role is filled by C444. Disordered stretches follow at residues 542 to 574 (KTLKRDKKRKKSKALPSRAPHHGDPLRDHLAVD), 595 to 629 (ISTSTKMSAPAKTVSQAGTSSQVRKPSKPLSTPLV), and 698 to 724 (TSSTSRRKEKVKESTTSSHVRHPRPWL). Positions 543-554 (TLKRDKKRKKSK) are enriched in basic residues. Over residues 562-572 (HHGDPLRDHLA) the composition is skewed to basic and acidic residues. Over residues 595–618 (ISTSTKMSAPAKTVSQAGTSSQVR) the composition is skewed to polar residues.

It belongs to the class I-like SAM-binding methyltransferase superfamily. RsmB/NOP family. As to expression, expressed in testis.

Functionally, may have S-adenosyl-L-methionine-dependent methyl-transferase activity. The sequence is that of Putative methyltransferase NSUN7 (Nsun7) from Mus musculus (Mouse).